The sequence spans 248 residues: Ubiquinone/menaquinone biosynthesis C-methyltransferase UbiE (248 aa).

S-adenosyl-L-methionine contacts are provided by serine 68 and aspartate 92.

The protein belongs to the class I-like SAM-binding methyltransferase superfamily. MenG/UbiE family.

The catalysed reaction is a 2-demethylmenaquinol + S-adenosyl-L-methionine = a menaquinol + S-adenosyl-L-homocysteine + H(+). It carries out the reaction a 2-methoxy-6-(all-trans-polyprenyl)benzene-1,4-diol + S-adenosyl-L-methionine = a 5-methoxy-2-methyl-3-(all-trans-polyprenyl)benzene-1,4-diol + S-adenosyl-L-homocysteine + H(+). It functions in the pathway quinol/quinone metabolism; menaquinone biosynthesis; menaquinol from 1,4-dihydroxy-2-naphthoate: step 2/2. The protein operates within cofactor biosynthesis; ubiquinone biosynthesis. Its function is as follows. Methyltransferase required for the conversion of demethylmenaquinol (DMKH2) to menaquinol (MKH2) and the conversion of 2-polyprenyl-6-methoxy-1,4-benzoquinol (DDMQH2) to 2-polyprenyl-3-methyl-6-methoxy-1,4-benzoquinol (DMQH2). This is Ubiquinone/menaquinone biosynthesis C-methyltransferase UbiE from Rickettsia africae (strain ESF-5).